The following is a 465-amino-acid chain: Fujikurins efflux protein FFUJ_12242 (465 aa).

A disordered region spans residues 1 to 66 (MATNVGGAVD…AAKAHDEGPP (66 aa)). Basic and acidic residues predominate over residues 11 to 28 (NSRRSISDNRHDPEKPAE). Transmembrane regions (helical) follow at residues 70–90 (TAAWMVVLGAWCCSFCSPGWI), 115–135 (WIPSLEIFFLFGLGPIVGIIF), 142–162 (PLIIGGTIFHVFGLMMASLAK), 175–195 (SAIGVACLYSPALACISTWFL), 200–220 (AAMGIMATGSSVGGVIFPIMI), 231–251 (WALRTAAFLILGLQVIACLTV), and 274–294 (PAFALLLAGIFILTYGMYIPI). The N-linked (GlcNAc...) asparagine glycan is linked to N310. The next 5 membrane-spanning stretches (helical) occupy residues 314–334 (YLVAIMNAASLFGRLGAGYGA), 342–362 (MFIIACGVTGISNLAVWIPAT), 368–388 (IGYAIMFGFASGAFVSLVGAL), 404–424 (IVFLVISIPALTMAPIGGAIL), and 430–450 (GWVSLKVFAGVMCLVGSAIIL).

It belongs to the major facilitator superfamily. Monocarboxylate porter (TC 2.A.1.13) family.

The protein resides in the cell membrane. Functionally, efflux pump that may be involved in the secretion of fujikurins. This is Fujikurins efflux protein FFUJ_12242 from Gibberella fujikuroi (strain CBS 195.34 / IMI 58289 / NRRL A-6831) (Bakanae and foot rot disease fungus).